The chain runs to 530 residues: Type 2 DNA topoisomerase 6 subunit B (530 aa).

Residues N42, D76, 97 to 98 (SK), 106 to 113 (GMYGLGVK), and K427 each bind ATP.

Belongs to the TOP6B family. In terms of assembly, homodimer. Heterotetramer of two Top6A and two Top6B chains.

The enzyme catalyses ATP-dependent breakage, passage and rejoining of double-stranded DNA.. Its function is as follows. Relaxes both positive and negative superturns and exhibits a strong decatenase activity. In Saccharolobus islandicus (strain Y.N.15.51 / Yellowstone #2) (Sulfolobus islandicus), this protein is Type 2 DNA topoisomerase 6 subunit B.